Reading from the N-terminus, the 493-residue chain is Glutamyl-tRNA(Gln) amidotransferase subunit A (493 aa).

Active-site charge relay system residues include Lys-78 and Ser-158. Catalysis depends on Ser-182, which acts as the Acyl-ester intermediate.

This sequence belongs to the amidase family. GatA subfamily. In terms of assembly, heterotrimer of A, B and C subunits.

It carries out the reaction L-glutamyl-tRNA(Gln) + L-glutamine + ATP + H2O = L-glutaminyl-tRNA(Gln) + L-glutamate + ADP + phosphate + H(+). In terms of biological role, allows the formation of correctly charged Gln-tRNA(Gln) through the transamidation of misacylated Glu-tRNA(Gln) in organisms which lack glutaminyl-tRNA synthetase. The reaction takes place in the presence of glutamine and ATP through an activated gamma-phospho-Glu-tRNA(Gln). The sequence is that of Glutamyl-tRNA(Gln) amidotransferase subunit A from Rickettsia felis (strain ATCC VR-1525 / URRWXCal2) (Rickettsia azadi).